We begin with the raw amino-acid sequence, 278 residues long: Large ribosomal subunit protein uL2 (278 aa).

Disordered regions lie at residues 29–57 (PEKSLVRPLHSKGGRNNAGRVTVRHQGGG) and 224–278 (VAMN…NKKR). The span at 258-278 (RSPKKASNKYIVRRRKTNKKR) shows a compositional bias: basic residues.

The protein belongs to the universal ribosomal protein uL2 family. Part of the 50S ribosomal subunit. Forms a bridge to the 30S subunit in the 70S ribosome.

One of the primary rRNA binding proteins. Required for association of the 30S and 50S subunits to form the 70S ribosome, for tRNA binding and peptide bond formation. It has been suggested to have peptidyltransferase activity; this is somewhat controversial. Makes several contacts with the 16S rRNA in the 70S ribosome. This Streptomyces griseus subsp. griseus (strain JCM 4626 / CBS 651.72 / NBRC 13350 / KCC S-0626 / ISP 5235) protein is Large ribosomal subunit protein uL2.